A 147-amino-acid chain; its full sequence is Sec-independent protein translocase protein TatB (147 aa).

Residues 2-22 (FSSIGWPEIFTVLILGLIIIG) traverse the membrane as a helical segment. The tract at residues 96 to 147 (FDPKKIMASGTEGEAYRERGINPQPAGDSASPQTPSNKESQPKAGFSWDDIT) is disordered. Polar residues predominate over residues 125–134 (ASPQTPSNKE).

It belongs to the TatB family. As to quaternary structure, the Tat system comprises two distinct complexes: a TatABC complex, containing multiple copies of TatA, TatB and TatC subunits, and a separate TatA complex, containing only TatA subunits. Substrates initially bind to the TatABC complex, which probably triggers association of the separate TatA complex to form the active translocon.

The protein localises to the cell membrane. Part of the twin-arginine translocation (Tat) system that transports large folded proteins containing a characteristic twin-arginine motif in their signal peptide across membranes. Together with TatC, TatB is part of a receptor directly interacting with Tat signal peptides. TatB may form an oligomeric binding site that transiently accommodates folded Tat precursor proteins before their translocation. The protein is Sec-independent protein translocase protein TatB of Corynebacterium diphtheriae (strain ATCC 700971 / NCTC 13129 / Biotype gravis).